Reading from the N-terminus, the 570-residue chain is Aspartyl aminopeptidase (570 aa).

His86 provides a ligand contact to Zn(2+). His160 is a binding site for substrate. Position 324 (Asp324) interacts with Zn(2+). Glu379 serves as a coordination point for substrate. The Zn(2+) site is built by Glu380 and Asp434. Substrate contacts are provided by Asp434, His437, Lys462, and Tyr469. His534 is a Zn(2+) binding site.

This sequence belongs to the peptidase M18 family. Homododecamer composed of homodimers and homotrimers that assemble into a tetrahedron shape to create a central tunnel containing the active sites. Homooctamer. The cofactor is Zn(2+).

Its subcellular location is the cytoplasm. The enzyme catalyses Release of an N-terminal aspartate or glutamate from a peptide, with a preference for aspartate.. Its activity is regulated as follows. Activated by Co(2+). Inhibited by high concentrations (&gt;1mM) of Zn(2+). In terms of biological role, aminopeptidase which specifically catalyzes the removal of glutamic acid or aspartic acid residues from the N-terminus of peptides. May play a role in the final step of host hemoglobin catabolism, by cleaving hemoglobin-derived oligopeptides in the cytoplasm. This Plasmodium falciparum (isolate 3D7) protein is Aspartyl aminopeptidase.